Here is a 37-residue protein sequence, read N- to C-terminus: Large ribosomal subunit protein bL36c (37 aa).

It belongs to the bacterial ribosomal protein bL36 family.

It is found in the plastid. It localises to the chloroplast. This is Large ribosomal subunit protein bL36c (rpl36) from Nephroselmis olivacea (Green alga).